The sequence spans 430 residues: Enolase (430 aa).

Gln167 provides a ligand contact to (2R)-2-phosphoglycerate. The Proton donor role is filled by Glu209. 3 residues coordinate Mg(2+): Asp246, Glu287, and Asp314. Positions 339, 368, 369, and 390 each coordinate (2R)-2-phosphoglycerate. Lys339 (proton acceptor) is an active-site residue.

Belongs to the enolase family. Mg(2+) serves as cofactor.

The protein resides in the cytoplasm. It localises to the secreted. The protein localises to the cell surface. It carries out the reaction (2R)-2-phosphoglycerate = phosphoenolpyruvate + H2O. Its pathway is carbohydrate degradation; glycolysis; pyruvate from D-glyceraldehyde 3-phosphate: step 4/5. Catalyzes the reversible conversion of 2-phosphoglycerate (2-PG) into phosphoenolpyruvate (PEP). It is essential for the degradation of carbohydrates via glycolysis. This Prochlorococcus marinus (strain AS9601) protein is Enolase.